Reading from the N-terminus, the 709-residue chain is Solute carrier organic anion transporter family member 2B1 (709 aa).

A disordered region spans residues 1-38 (MGPRIGPAGEVPQVPDKETKATMGTENTPGGKASPDPQ). The Cytoplasmic segment spans residues 1 to 49 (MGPRIGPAGEVPQVPDKETKATMGTENTPGGKASPDPQDVRPSVFHNIK). S34 carries the phosphoserine modification. A helical transmembrane segment spans residues 50–69 (LFVLCHSLLQLAQLMISGYL). Positions 51–69 (FVLCHSLLQLAQLMISGYL) are required for E1S and taurocholate transport; required for transporter stability. Topologically, residues 70-88 (KSSISTVEKRFGLSSQTSG) are extracellular. Residues 89 to 109 (LLASFNEVGNTALIVFVSYFG) traverse the membrane as a helical segment. Residues 110–115 (SRVHRP) lie on the Cytoplasmic side of the membrane. A helical transmembrane segment spans residues 116 to 140 (RMIGYGAILVALAGLLMTLPHFISE). The Extracellular portion of the chain corresponds to 141 to 185 (PYRYDNTSPEDMPQDFKASLCLPTTSAPASAPSNGNCSSYTETQH). N-linked (GlcNAc...) asparagine glycosylation is present at N176. Residues 186-215 (LSVVGIMFVAQTLLGVGGVPIQPFGISYID) form a helical membrane-spanning segment. Residues 216-234 (DFAHNSNSPLYLGILFAVT) are Cytoplasmic-facing. The helical transmembrane segment at 235 to 255 (MMGPGLAFGLGSLMLRLYVDI) threads the bilayer. Residues 256 to 273 (NQMPEGGISLTIKDPRWV) are Extracellular-facing. A helical membrane pass occupies residues 274–298 (GAWWLGFLIAAGAVALAAIPYFFFP). Topologically, residues 299-366 (KEMPKEKREL…IKVFPRVLLQ (68 aa)) are cytoplasmic. At T318 the chain carries Phosphothreonine. The interval 319 to 342 (DSPARKGKDSPSKQSPGESTKKQD) is disordered. Position 320 is a phosphoserine (S320). The chain crosses the membrane as a helical span at residues 367-388 (TLRHPIFLLVVLSQVCLSSMAA). At 389 to 408 (GMATFLPKFLERQFSITASY) the chain is on the extracellular side. The chain crosses the membrane as a helical span at residues 409–432 (ANLLIGCLSFPSVIVGIVVGGVLV). Residues 433-436 (KRLH) lie on the Cytoplasmic side of the membrane. A helical transmembrane segment spans residues 437–460 (LGPVGCGALCLLGMLLCLFFSLPL). The Extracellular portion of the chain corresponds to 461–564 (FFIGCSSHQI…STCSHLVVPF (104 aa)). One can recognise a Kazal-like domain in the interval 483 to 543 (LELSPSCMEA…VFYTNCSCVV (61 aa)). 3 disulfide bridges follow: C489-C520, C495-C516, and C504-C541. N538 carries an N-linked (GlcNAc...) asparagine glycan. A helical membrane pass occupies residues 565-587 (LLLVSLGSALACLTHTPSFMLIL). At 588–596 (RGVKKEDKT) the chain is on the cytoplasmic side. A helical membrane pass occupies residues 597 to 622 (LAVGIQFMFLRILAWMPSPVIHGSAI). Topologically, residues 623 to 655 (DTTCVHWALSCGRRAVCRYYNNDLLRNRFIGLQ) are extracellular. The chain crosses the membrane as a helical span at residues 656-673 (FFFKTGSVICFALVLAVL). The Cytoplasmic segment spans residues 674 to 709 (RQQDKEARTKESRSSPAVEQQLLVSGPGKKPEDSRV). Positions 679–709 (EARTKESRSSPAVEQQLLVSGPGKKPEDSRV) are disordered.

Belongs to the organo anion transporter (TC 2.A.60) family. As to expression, strongly expressed in the liver, at the sinusoidal membrane of the hepatocytes. Expressed in the kidney. Expressed in placental trophoblasts and syncytiotrophoblast. Expressed in the small intestine. Expressed in the blood-brain barrier, in endothelial cells of brain capillaries. Expressed in the retina, in the inner nuclear layer and the inner plexiform layer. Expressed in skelettal muscles. In testis, primarily localized to the basal membrane of Sertoli cells and weakly expressed within the tubules. Also expressed in pancreas, lung, heart, colon, ovary and spleen. Expressed in fetal brain, heart, kidney, liver, lung, skeletal muscle, spleen and pancreas. In terms of tissue distribution, highest expression in brain. Predominant isoform compared to isoform 3 in small intestine duodenum, kidney, placenta, and skeletal muscle. Predominant isoform compared to isoform 1 in liver. Also expressed in small intestine duodenum, kidney, brain, placenta, and skeletal muscle.

It localises to the cell membrane. The protein localises to the basal cell membrane. Its subcellular location is the basolateral cell membrane. It is found in the apical cell membrane. It catalyses the reaction dehydroepiandrosterone 3-sulfate(out) = dehydroepiandrosterone 3-sulfate(in). The catalysed reaction is estrone 3-sulfate(out) = estrone 3-sulfate(in). The enzyme catalyses estrone 3-sulfate(out) + hydrogencarbonate(in) = estrone 3-sulfate(in) + hydrogencarbonate(out). It carries out the reaction taurocholate(out) = taurocholate(in). It catalyses the reaction coproporphyrin III(out) = coproporphyrin III(in). The catalysed reaction is substance P(out) = substance P(in). The enzyme catalyses pregnenolone sulfate(out) = pregnenolone sulfate(in). It carries out the reaction prostaglandin E2(out) = prostaglandin E2(in). It catalyses the reaction prostaglandin D2(out) = prostaglandin D2(in). The catalysed reaction is L-thyroxine(out) = L-thyroxine(in). E1S, DHEA-S and PregS transports are regulated by steroid hormones. In the case of testosterone, transport of E1S and DHEA-S was inhibited, whereas progesterone stimulated E1S, DHEA-S and PregS uptake. Progesterone stimulates high-affinity uptake of E1S whereas it inhibits low-affinity uptake of E1S. Progesterone doesn't affect the uptake of PGE2. In terms of biological role, mediates the Na(+)-independent transport of steroid sulfate conjugates and other specific organic anions. Responsible for the transport of estrone 3-sulfate (E1S) through the basal membrane of syncytiotrophoblast, highlighting a potential role in the placental absorption of fetal-derived sulfated steroids including the steroid hormone precursor dehydroepiandrosterone sulfate (DHEA-S). Also facilitates the uptake of sulfated steroids at the basal/sinusoidal membrane of hepatocytes, therefore accounting for the major part of organic anions clearance of liver. Mediates the intestinal uptake of sulfated steroids. Mediates the uptake of the neurosteroids DHEA-S and pregnenolone sulfate (PregS) into the endothelial cells of the blood-brain barrier as the first step to enter the brain. Also plays a role in the reuptake of neuropeptides such as substance P/TAC1 and vasoactive intestinal peptide/VIP released from retinal neurons. May act as a heme transporter that promotes cellular iron availability via heme oxygenase/HMOX2 and independently of TFRC. Also transports heme by-product coproporphyrin III (CPIII), and may be involved in their hepatic disposition. Mediates the uptake of other substrates such as prostaglandins D2 (PGD2), E1 (PGE1) and E2 (PGE2), taurocholate, L-thyroxine, leukotriene C4 and thromboxane B2. May contribute to regulate the transport of organic compounds in testis across the blood-testis-barrier. Shows a pH-sensitive substrate specificity which may be ascribed to the protonation state of the binding site and leads to a stimulation of substrate transport in an acidic microenvironment. The exact transport mechanism has not been yet deciphered but most likely involves an anion exchange, coupling the cellular uptake of organic substrate with the efflux of an anionic compound. Hydrogencarbonate/HCO3(-) acts as a probable counteranion that exchanges for organic anions. Cytoplasmic glutamate may also act as counteranion in the placenta. An inwardly directed proton gradient has also been proposed as the driving force of E1S uptake with a (H(+):E1S) stoichiometry of (1:1). Its function is as follows. Has estrone 3-sulfate (E1S) transport activity comparable with the full-length isoform 1. This chain is Solute carrier organic anion transporter family member 2B1, found in Homo sapiens (Human).